We begin with the raw amino-acid sequence, 492 residues long: Adenosylhomocysteinase (492 aa).

Residues Thr-68, Asp-153, and Glu-215 each contribute to the substrate site. 216–218 (TTT) contributes to the NAD(+) binding site. Lys-245 and Asp-249 together coordinate substrate. Residues Asn-250, 279-284 (GYGDVG), Glu-302, Asn-337, 358-360 (IGH), and Asn-406 contribute to the NAD(+) site.

Belongs to the adenosylhomocysteinase family. The cofactor is NAD(+).

The protein resides in the cytoplasm. It carries out the reaction S-adenosyl-L-homocysteine + H2O = L-homocysteine + adenosine. The protein operates within amino-acid biosynthesis; L-homocysteine biosynthesis; L-homocysteine from S-adenosyl-L-homocysteine: step 1/1. Functionally, may play a key role in the regulation of the intracellular concentration of adenosylhomocysteine. This Mycobacterium marinum (strain ATCC BAA-535 / M) protein is Adenosylhomocysteinase.